A 105-amino-acid polypeptide reads, in one-letter code: Large ribosomal subunit protein eL36 (105 aa).

Positions 86 to 105 are disordered; the sequence is QAGKKKRDDIANINRKASAK.

It belongs to the eukaryotic ribosomal protein eL36 family.

The polypeptide is Large ribosomal subunit protein eL36 (rpl36) (Dictyostelium discoideum (Social amoeba)).